The primary structure comprises 229 residues: Large ribosomal subunit protein uL1 (229 aa).

It belongs to the universal ribosomal protein uL1 family. In terms of assembly, part of the 50S ribosomal subunit.

Binds directly to 23S rRNA. The L1 stalk is quite mobile in the ribosome, and is involved in E site tRNA release. Functionally, protein L1 is also a translational repressor protein, it controls the translation of the L11 operon by binding to its mRNA. The chain is Large ribosomal subunit protein uL1 from Thermus thermophilus (strain ATCC BAA-163 / DSM 7039 / HB27).